Consider the following 121-residue polypeptide: Protein opa (121 aa).

It belongs to the opacity porin family.

This is Protein opa (opa) from Haemophilus influenzae (strain ATCC 51907 / DSM 11121 / KW20 / Rd).